We begin with the raw amino-acid sequence, 110 residues long: Phosphoribosyl-ATP pyrophosphatase (110 aa).

It belongs to the PRA-PH family.

Its subcellular location is the cytoplasm. The enzyme catalyses 1-(5-phospho-beta-D-ribosyl)-ATP + H2O = 1-(5-phospho-beta-D-ribosyl)-5'-AMP + diphosphate + H(+). It functions in the pathway amino-acid biosynthesis; L-histidine biosynthesis; L-histidine from 5-phospho-alpha-D-ribose 1-diphosphate: step 2/9. This chain is Phosphoribosyl-ATP pyrophosphatase, found in Lacticaseibacillus casei (strain BL23) (Lactobacillus casei).